Here is a 152-residue protein sequence, read N- to C-terminus: Large ribosomal subunit protein uL13 (152 aa).

The protein belongs to the universal ribosomal protein uL13 family. Part of the 50S ribosomal subunit.

This protein is one of the early assembly proteins of the 50S ribosomal subunit, although it is not seen to bind rRNA by itself. It is important during the early stages of 50S assembly. This is Large ribosomal subunit protein uL13 from Neorickettsia sennetsu (strain ATCC VR-367 / Miyayama) (Ehrlichia sennetsu).